Reading from the N-terminus, the 970-residue chain is uncharacterized protein (970 aa).

A helical transmembrane segment spans residues tryptophan 11–phenylalanine 31. Positions alanine 366–isoleucine 387 are disordered. The span at serine 367–isoleucine 387 shows a compositional bias: low complexity. The next 11 membrane-spanning stretches (helical) occupy residues phenylalanine 515 to leucine 535, tyrosine 537 to valine 557, isoleucine 558 to isoleucine 578, phenylalanine 614 to leucine 634, leucine 645 to isoleucine 665, phenylalanine 726 to valine 746, serine 762 to isoleucine 782, cysteine 789 to leucine 809, isoleucine 816 to alanine 836, isoleucine 877 to isoleucine 897, and leucine 903 to proline 923.

The protein localises to the cell membrane. This is an uncharacterized protein from Mycoplasma genitalium (strain ATCC 33530 / DSM 19775 / NCTC 10195 / G37) (Mycoplasmoides genitalium).